We begin with the raw amino-acid sequence, 352 residues long: Transcription factor BHLH156 (352 aa).

A disordered region spans residues 59 to 141 (GGDDDDNGGV…RSKTIVSERK (83 aa)). Positions 130 to 143 (RDRSKTIVSERKRR) are basic motif. Residues 130 to 179 (RDRSKTIVSERKRRVRMKEKLYELRALVPNITKMDKASIIADAVVYVKDL) form the bHLH domain. A helix-loop-helix motif region spans residues 144–179 (VRMKEKLYELRALVPNITKMDKASIIADAVVYVKDL). Residues 194–216 (EEARPIRPPPPSAAAQRPQRQPR) form a disordered region. The span at 206–216 (AAAQRPQRQPR) shows a compositional bias: low complexity.

The protein belongs to the bHLH protein family. Forms homodimers. Interacts with IRO2 in the nucleus. In terms of tissue distribution, expressed in the meristematic zone of lateral and primary roots.

It localises to the nucleus. Transcription factor involved in positive regulation of genes involved in strategy II iron acquisition, including genes for mugineic acid (MA) family phytosiderophores biosynthesis, and genes involved in S-adenosylmethionine cycle and iron transport. May play a role in the regulation of iron deficiency response by promoting the nuclear localization of IRO2. Possesses transactivation activity in yeast. The protein is Transcription factor BHLH156 of Oryza sativa subsp. japonica (Rice).